The following is a 337-amino-acid chain: ADP-ribosylation factor GTPase-activating protein AGD12 (337 aa).

An Arf-GAP domain is found at 15 to 137 (KRRIRDLLTQ…EFLKPSLRIT (123 aa)). The segment at 30–53 (CADCGAPDPKWASANIGVFICLKC) adopts a C4-type zinc-finger fold. The C2 domain occupies 164–281 (TNSSSQQPQL…AMAFGDPEMF (118 aa)). Asp-250, Ser-253, and Asp-256 together coordinate Ca(2+).

It depends on Ca(2+) as a cofactor. In terms of tissue distribution, expressed in roots, leaves, flowers and siliques. Low levels of expression in seeds and stems.

Its subcellular location is the golgi apparatus. The protein localises to the cell membrane. Its function is as follows. GTPase-activating protein (GAP) for ADP ribosylation factor (ARF). Binds phosphatidylinositol 3-monophosohate (PI-3-P) and anionic phospholipids. This chain is ADP-ribosylation factor GTPase-activating protein AGD12 (AGD12), found in Arabidopsis thaliana (Mouse-ear cress).